The following is a 431-amino-acid chain: Tyrosine--tRNA ligase (431 aa).

Tyr-33 contacts L-tyrosine. Residues 38–47 (PTADSLHIGS) carry the 'HIGH' region motif. The L-tyrosine site is built by Tyr-172 and Gln-176. Positions 234 to 238 (KFGKS) match the 'KMSKS' region motif. Residue Lys-237 participates in ATP binding. The region spanning 364-431 (INIVEVLNEK…KKNYFVLNVK (68 aa)) is the S4 RNA-binding domain.

It belongs to the class-I aminoacyl-tRNA synthetase family. TyrS type 1 subfamily. Homodimer.

The protein localises to the cytoplasm. The enzyme catalyses tRNA(Tyr) + L-tyrosine + ATP = L-tyrosyl-tRNA(Tyr) + AMP + diphosphate + H(+). In terms of biological role, catalyzes the attachment of tyrosine to tRNA(Tyr) in a two-step reaction: tyrosine is first activated by ATP to form Tyr-AMP and then transferred to the acceptor end of tRNA(Tyr). The chain is Tyrosine--tRNA ligase from Flavobacterium psychrophilum (strain ATCC 49511 / DSM 21280 / CIP 103535 / JIP02/86).